The sequence spans 274 residues: NH(3)-dependent NAD(+) synthetase (274 aa).

Gly46–Ser53 lines the ATP pocket. Position 52 (Asp52) interacts with Mg(2+). Position 140 (Arg140) interacts with deamido-NAD(+). Thr160 is an ATP binding site. Glu165 is a binding site for Mg(2+). Residues Lys173 and Asp180 each contribute to the deamido-NAD(+) site. Lys189 and Thr211 together coordinate ATP. His260–Lys261 contacts deamido-NAD(+).

The protein belongs to the NAD synthetase family. Homodimer.

The enzyme catalyses deamido-NAD(+) + NH4(+) + ATP = AMP + diphosphate + NAD(+) + H(+). Its pathway is cofactor biosynthesis; NAD(+) biosynthesis; NAD(+) from deamido-NAD(+) (ammonia route): step 1/1. Its function is as follows. Catalyzes the ATP-dependent amidation of deamido-NAD to form NAD. Uses ammonia as a nitrogen source. The polypeptide is NH(3)-dependent NAD(+) synthetase (Streptococcus pyogenes serotype M3 (strain ATCC BAA-595 / MGAS315)).